The chain runs to 67 residues: ATP synthase protein 8 (67 aa).

The helical transmembrane segment at 8–24 (TWFITITSMTITLFIMF) threads the bilayer. Lysine 54 carries the N6-acetyllysine; alternate modification. Lysine 54 is modified (N6-succinyllysine; alternate). Lysine 57 bears the N6-acetyllysine mark.

Belongs to the ATPase protein 8 family. In terms of assembly, F-type ATPases have 2 components, CF(1) - the catalytic core - and CF(0) - the membrane proton channel. Component of an ATP synthase complex composed of ATP5PB, ATP5MC1, ATP5F1E, ATP5PD, ATP5ME, ATP5PF, ATP5MF, MT-ATP6, MT-ATP8, ATP5F1A, ATP5F1B, ATP5F1D, ATP5F1C, ATP5PO, ATP5MG, ATP5MK and ATP5MJ. Interacts with PRICKLE3.

The protein localises to the mitochondrion membrane. Mitochondrial membrane ATP synthase (F(1)F(0) ATP synthase or Complex V) produces ATP from ADP in the presence of a proton gradient across the membrane which is generated by electron transport complexes of the respiratory chain. F-type ATPases consist of two structural domains, F(1) - containing the extramembraneous catalytic core and F(0) - containing the membrane proton channel, linked together by a central stalk and a peripheral stalk. During catalysis, ATP synthesis in the catalytic domain of F(1) is coupled via a rotary mechanism of the central stalk subunits to proton translocation. Part of the complex F(0) domain. Minor subunit located with subunit a in the membrane. The sequence is that of ATP synthase protein 8 (MT-ATP8) from Rhinoceros unicornis (Greater Indian rhinoceros).